The chain runs to 545 residues: Glucose-6-phosphate isomerase (545 aa).

The active-site Proton donor is Glu-351. Catalysis depends on residues His-382 and Lys-510.

Belongs to the GPI family.

It is found in the cytoplasm. It carries out the reaction alpha-D-glucose 6-phosphate = beta-D-fructose 6-phosphate. It participates in carbohydrate biosynthesis; gluconeogenesis. It functions in the pathway carbohydrate degradation; glycolysis; D-glyceraldehyde 3-phosphate and glycerone phosphate from D-glucose: step 2/4. Functionally, catalyzes the reversible isomerization of glucose-6-phosphate to fructose-6-phosphate. The protein is Glucose-6-phosphate isomerase of Shewanella pealeana (strain ATCC 700345 / ANG-SQ1).